The sequence spans 590 residues: DNA mismatch repair protein MutL (590 aa).

Over residues 335–351 (PLSSASPKLPESTTATA) the composition is skewed to polar residues. A disordered region spans residues 335-354 (PLSSASPKLPESTTATAQPH).

The protein belongs to the DNA mismatch repair MutL/HexB family.

In terms of biological role, this protein is involved in the repair of mismatches in DNA. It is required for dam-dependent methyl-directed DNA mismatch repair. May act as a 'molecular matchmaker', a protein that promotes the formation of a stable complex between two or more DNA-binding proteins in an ATP-dependent manner without itself being part of a final effector complex. This chain is DNA mismatch repair protein MutL, found in Dichelobacter nodosus (strain VCS1703A).